The following is a 404-amino-acid chain: High affinity immunoglobulin gamma Fc receptor I (404 aa).

Positions 1-24 (MILTSFGDDMWLLTTLLLWVPVGG) are cleaved as a signal peptide. Over 25–297 (EVVNATKAVI…QVLGPQSSAP (273 aa)) the chain is Extracellular. N-linked (GlcNAc...) asparagine glycosylation is found at Asn-28, Asn-48, Asn-69, Asn-168, and Asn-249. Ig-like C2-type domains are found at residues 32 to 111 (AVIT…LQIH), 117 to 194 (LQAS…SITV), and 201 to 286 (PVLR…PELE). Intrachain disulfides connect Cys-53/Cys-95, Cys-134/Cys-177, and Cys-221/Cys-269. Residues 298–320 (VWFHILFYLSVGIMFSLNTVLYV) form a helical membrane-spanning segment. The segment at 321–342 (KIHRLQREKKYNLEVPLVSEQG) is interaction with EPB41L2. Residues 321–404 (KIHRLQREKK…DSTGAQTSQS (84 aa)) lie on the Cytoplasmic side of the membrane. The tract at residues 346-404 (NSFQQVRSDGVYEEVTATASQTTPKEAPDGPRSSVGDCGPEQPEPLPPSDSTGAQTSQS) is disordered. Ser-347 is subject to Phosphoserine. The residue at position 368 (Thr-368) is a Phosphothreonine. Over residues 394–404 (SDSTGAQTSQS) the composition is skewed to polar residues.

Belongs to the immunoglobulin superfamily. FCGR1 family. Interacts with FCERG1; forms a functional signaling complex. Interacts with FLNA; prevents FCGR1A degradation. Interacts with EPB41L2, LAT and PPL. Interacts with HCK and LYN. N-glycosylated. Post-translationally, phosphorylated on serine residues. Macrophage-specific.

The protein resides in the cell membrane. High affinity receptor for the Fc region of immunoglobulins gamma. Functions in both innate and adaptive immune responses. This is High affinity immunoglobulin gamma Fc receptor I (Fcgr1) from Mus musculus (Mouse).